The sequence spans 377 residues: Cell division protein FtsZ (377 aa).

The span at 1–16 shows a compositional bias: acidic residues; the sequence is MDSIVDDAIDEAEDMG. A disordered region spans residues 1 to 33; that stretch reads MDSIVDDAIDEAEDMGDGSAEVGGPTDINRSGT. Residues 57–61, 144–146, glutamate 175, arginine 179, and aspartate 222 each bind GTP; these read GAGGN and GTG.

The protein belongs to the FtsZ family. As to quaternary structure, homodimer. Polymerizes to form a dynamic ring structure in a strictly GTP-dependent manner. Interacts directly with several other division proteins.

The protein resides in the cytoplasm. Its function is as follows. Essential cell division protein that forms a contractile ring structure (Z ring) at the future cell division site. The regulation of the ring assembly controls the timing and the location of cell division. One of the functions of the FtsZ ring is to recruit other cell division proteins to the septum to produce a new cell wall between the dividing cells. Binds GTP and shows GTPase activity. This chain is Cell division protein FtsZ, found in Haloferax mediterranei (strain ATCC 33500 / DSM 1411 / JCM 8866 / NBRC 14739 / NCIMB 2177 / R-4) (Halobacterium mediterranei).